A 338-amino-acid chain; its full sequence is P2Y purinoceptor 14 (338 aa).

Over 1-29 (MINSTSTQPPDESCSQNLLITQQIIPVLY) the chain is Extracellular. Asparagine 3 carries an N-linked (GlcNAc...) asparagine glycan. The helical transmembrane segment at 30 to 50 (CMVFIAGILLNGVSGWIFFYV) threads the bilayer. The Cytoplasmic portion of the chain corresponds to 51–55 (PSSKS). Residues 56-76 (FIIYLKNIVIADFVMSLTFPF) traverse the membrane as a helical segment. Topologically, residues 77–96 (KILGDSGLGPWQLNVFVCRV) are extracellular. The cysteines at positions 94 and 172 are disulfide-linked. The chain crosses the membrane as a helical span at residues 97–117 (SAVLFYVNMYVSIVFFGLISF). Residues 118–139 (DRYYKIVKPLWTSFIQSVSYSK) are Cytoplasmic-facing. The helical transmembrane segment at 140 to 160 (LLSVIVWMLMLLLAVPNIILT) threads the bilayer. A glycan (N-linked (GlcNAc...) asparagine) is linked at asparagine 161. At 161–188 (NQSVREVTQIKCIELKSELGRKWHKASN) the chain is on the extracellular side. Residues 189-209 (YIFVAIFWIVFLLLIVFYTAI) form a helical membrane-spanning segment. Over 210–234 (TKKIFKSHLKSSRNSTSVKKKSSRN) the chain is Cytoplasmic. The helical transmembrane segment at 235–255 (IFSIVFVFFVCFVPYHIARIP) threads the bilayer. Residues 256–278 (YTKSQTEAHYSCQSKEILRYMKE) lie on the Extracellular side of the membrane. Residues 279–299 (FTLLLSAANVCLDPIIYFFLC) form a helical membrane-spanning segment. The Cytoplasmic portion of the chain corresponds to 300-338 (QPFREILCKKLHIPLKAQNDLDISRIKRGNTTLESTDTL).

Belongs to the G-protein coupled receptor 1 family. As to expression, highest expression in the placenta, adipose tissue, stomach and intestine, intermediate levels in the brain, spleen, lung and heart, lowest levels in the kidney.

The protein localises to the cell membrane. Functionally, receptor for UDP-glucose and other UDP-sugar coupled to G-proteins. Not activated by ATP, ADP, UTP or ATP. This Homo sapiens (Human) protein is P2Y purinoceptor 14 (P2RY14).